A 600-amino-acid chain; its full sequence is Kelch-like protein 24 (600 aa).

In terms of domain architecture, BTB spans 66 to 133 (TDVIICVEGK…VYTGKVKITT (68 aa)). Residues 168–270 (CLGIQRFADT…HPNYFVQTVE (103 aa)) form the BACK domain. Kelch repeat units lie at residues 314-363 (VIVV…ALRN), 365-407 (ILVS…VLLG), 408-454 (KVYV…SCVG), 456-502 (LFVI…SLNN), 504-544 (IYVA…VCNG), and 546-592 (IYIL…TIHR).

Forms homodimers. Interacts with GRIK2. Component of the BCR(KLHL24) E3 ubiquitin ligase complex, composed of CUL3, RBX1 and KLHL24. Interacts with CUL3. Interacts with KRT14. Autoubiquitinated. Autoubiquitination leads to proteasomal degradation and is necessary to control KLHL24 levels. As to expression, expressed in the skin. Found in keratinocytes, dermal fibroblasts, and melanocytes. Basal-layer keratinocytes have lower KLHL24 expression than suprabasal keratinocytes. Expressed in the brain, spinal cord, liver, testis, heart and at higher levels in the skeletal muscle.

The protein resides in the perikaryon. It localises to the cell projection. It is found in the axon. The protein localises to the cytoplasm. Its subcellular location is the cell junction. The protein resides in the desmosome. It localises to the adherens junction. Its function is as follows. Necessary to maintain the balance between intermediate filament stability and degradation, a process that is essential for skin integrity. As part of the BCR(KLHL24) E3 ubiquitin ligase complex, mediates ubiquitination of KRT14 and controls its levels during keratinocytes differentiation. Specifically reduces kainate receptor-mediated currents in hippocampal neurons, most probably by modulating channel properties. Has a crucial role in cardiac development and function. In Homo sapiens (Human), this protein is Kelch-like protein 24 (KLHL24).